The primary structure comprises 301 residues: Nucleotide-binding protein Mb1456 (301 aa).

24–31 is an ATP binding site; it reads GLSGAGRG. Position 75–78 (75–78) interacts with GTP; that stretch reads DVRS.

Belongs to the RapZ-like family.

Functionally, displays ATPase and GTPase activities. The polypeptide is Nucleotide-binding protein Mb1456 (Mycobacterium bovis (strain ATCC BAA-935 / AF2122/97)).